Consider the following 662-residue polypeptide: Serine/threonine kinase-like domain-containing protein STKLD1 (662 aa).

A Protein kinase domain is found at 1-202; that stretch reads MLNPGALGVN…ILDMATCSFL (202 aa). Residues 2–10 and Lys-25 contribute to the ATP site; that span reads LNPGALGVN. The disordered stretch occupies residues 639-662; sequence LQEDQLEPPAGQEAPLQGEPLFRP.

Belongs to the protein kinase superfamily. Ser/Thr protein kinase family. STKL subfamily.

In Mus musculus (Mouse), this protein is Serine/threonine kinase-like domain-containing protein STKLD1 (Stkld1).